Here is a 451-residue protein sequence, read N- to C-terminus: ATP-dependent protease ATPase subunit HslU (451 aa).

ATP contacts are provided by residues Ile-26, 68–73 (GVGKTE), Asp-263, Glu-328, and Arg-400.

Belongs to the ClpX chaperone family. HslU subfamily. As to quaternary structure, a double ring-shaped homohexamer of HslV is capped on each side by a ring-shaped HslU homohexamer. The assembly of the HslU/HslV complex is dependent on binding of ATP.

Its subcellular location is the cytoplasm. Functionally, ATPase subunit of a proteasome-like degradation complex; this subunit has chaperone activity. The binding of ATP and its subsequent hydrolysis by HslU are essential for unfolding of protein substrates subsequently hydrolyzed by HslV. HslU recognizes the N-terminal part of its protein substrates and unfolds these before they are guided to HslV for hydrolysis. This Dichelobacter nodosus (strain VCS1703A) protein is ATP-dependent protease ATPase subunit HslU.